The chain runs to 381 residues: NF-kappa-B inhibitor-like protein 1 (381 aa).

The segment at 1 to 34 (MSNPSPQVPEEEASTSVCRPKSSMASTSRRQRRE) is disordered. ANK repeat units lie at residues 64–93 (GQPP…DPAH) and 97–130 (HGDT…AMGI). Disordered stretches follow at residues 129–167 (GIKN…EWRQ) and 186–294 (GDAS…RGSL). A Phosphoserine modification is found at S150. The segment covering 150 to 159 (SAEEEEEDDA) has biased composition (acidic residues). Basic and acidic residues-rich tracts occupy residues 218-228 (REAEGSRRPPR) and 238-287 (QQEE…EHPR).

Interacts with CACTIN (via N-terminal domain); the interaction occurs in a proinflammatory-independent manner. In terms of tissue distribution, detected in different cell types including monocytes, T-cells, B-cells and hepatocytes.

It localises to the nucleus. Its function is as follows. Involved in the regulation of innate immune response. Acts as negative regulator of Toll-like receptor and interferon-regulatory factor (IRF) signaling pathways. Contributes to the negative regulation of transcriptional activation of NF-kappa-B target genes in response to endogenous proinflammatory stimuli. In Homo sapiens (Human), this protein is NF-kappa-B inhibitor-like protein 1 (NFKBIL1).